The sequence spans 141 residues: Hemoglobin subunit alpha-A (141 aa).

The region spanning valine 1–arginine 141 is the Globin domain. Residue histidine 58 participates in O2 binding. Position 87 (histidine 87) interacts with heme b.

This sequence belongs to the globin family. As to quaternary structure, heterotetramer of two alpha chains and two beta chains. Red blood cells.

Functionally, involved in oxygen transport from the lung to the various peripheral tissues. The sequence is that of Hemoglobin subunit alpha-A (HBAA) from Turdus merula (Common blackbird).